The primary structure comprises 102 residues: Small integral membrane protein 29 (102 aa).

The N-linked (GlcNAc...) asparagine glycan is linked to Asn-3. The helical transmembrane segment at 21 to 41 (VLGPFFLITLVGVVVAVVMYV) threads the bilayer.

The protein resides in the membrane. The protein is Small integral membrane protein 29 of Mus musculus (Mouse).